The primary structure comprises 326 residues: Flotillin-like protein FloA (326 aa).

Helical transmembrane passes span 6 to 26 (IILF…GSSV) and 27 to 47 (SLWI…IVFM).

It belongs to the flotillin-like FloA family. In terms of assembly, homooligomerizes.

The protein resides in the cell membrane. It localises to the membrane raft. In terms of biological role, found in functional membrane microdomains (FMM) that may be equivalent to eukaryotic membrane rafts. FMMs are highly dynamic and increase in number as cells age. Flotillins are thought to be important factors in membrane fluidity. The chain is Flotillin-like protein FloA from Desulfosudis oleivorans (strain DSM 6200 / JCM 39069 / Hxd3) (Desulfococcus oleovorans).